Reading from the N-terminus, the 288-residue chain is Pantothenate synthetase (288 aa).

30 to 37 serves as a coordination point for ATP; it reads MGNLHNGH. The active-site Proton donor is H37. Q61 contacts (R)-pantoate. Beta-alanine is bound at residue Q61. Position 149 to 152 (149 to 152) interacts with ATP; it reads GQKD. Q155 serves as a coordination point for (R)-pantoate. ATP contacts are provided by residues V178 and 186-189; that span reads LSSR.

The protein belongs to the pantothenate synthetase family. As to quaternary structure, homodimer.

It is found in the cytoplasm. The enzyme catalyses (R)-pantoate + beta-alanine + ATP = (R)-pantothenate + AMP + diphosphate + H(+). It participates in cofactor biosynthesis; (R)-pantothenate biosynthesis; (R)-pantothenate from (R)-pantoate and beta-alanine: step 1/1. Its function is as follows. Catalyzes the condensation of pantoate with beta-alanine in an ATP-dependent reaction via a pantoyl-adenylate intermediate. In Tolumonas auensis (strain DSM 9187 / NBRC 110442 / TA 4), this protein is Pantothenate synthetase.